An 811-amino-acid chain; its full sequence is U-box domain-containing protein 43 (811 aa).

Residues 24-103 form the U-box domain; it reads NIYEAFICPL…EEWRARNDAL (80 aa). ARM repeat units follow at residues 136-175, 178-217, 220-261, 263-302, 303-342, 344-388, 399-438, 444-484, and 489-528; these read RKIRQRVCNPQLVRLITDMLKSSSHEVRCKALQTLQVVVE, EESKAIVAEGDTVRTIVKFLSQEPSKGREAAVSVLFELSK, ALCE…NLER, EENVRQMAINGRLQPLLAKLLEGSPETKVSMAFYLGVLAL, NNDVKVIVAQTVGSSLIDLMRTRDMSQREAALGALNNISS, EGSA…NIVN, GPHHQTLVSEEIVENLLQLTSNTGPEIQGKLLAVLVGLTS, INVV…NISP, and ELANALRSTVGQLGSLVSIISENTPTITEEQAAAAGLLAE.

It catalyses the reaction S-ubiquitinyl-[E2 ubiquitin-conjugating enzyme]-L-cysteine + [acceptor protein]-L-lysine = [E2 ubiquitin-conjugating enzyme]-L-cysteine + N(6)-ubiquitinyl-[acceptor protein]-L-lysine.. Its pathway is protein modification; protein ubiquitination. Functions as an E3 ubiquitin ligase. In Arabidopsis thaliana (Mouse-ear cress), this protein is U-box domain-containing protein 43 (PUB43).